The primary structure comprises 444 residues: Cell division cycle 20.4, cofactor of APC complex (444 aa).

Residues Leu88 to Gln99 are compositionally biased toward polar residues. The segment at Leu88–Arg108 is disordered. 7 WD repeats span residues Arg124–Leu161, Glu166–Thr205, Gly209–Glu246, Gly250–Thr289, Glu298–Ser340, Glu342–Glu383, and Gly386–Thr425.

The protein belongs to the WD repeat CDC20/Fizzy family. In terms of assembly, the APC/C is composed of at least 11 subunits that stay tightly associated throughout the cell cycle.

The protein localises to the cytoplasm. Its pathway is protein modification; protein ubiquitination. Its function is as follows. Component of the anaphase promoting complex/cyclosome (APC/C), a cell cycle-regulated E3 ubiquitin-protein ligase complex that controls progression through mitosis and the G1 phase of the cell cycle. This is Cell division cycle 20.4, cofactor of APC complex (CDC20-4) from Arabidopsis thaliana (Mouse-ear cress).